The sequence spans 521 residues: Forkhead box protein N4 (521 aa).

Positions 197 to 293 form a DNA-binding region, fork-head; sequence KPIYSYSCLI…EEMHKWKRKD (97 aa). Positions 371–406 are disordered; sequence PQAHLAPDSPAPAQTPPLHALPSLSPGPLPQPAMGR.

As to expression, mainly expressed in proliferator progenitor cells in brain and retina rather than differentiated cells. In contrast, is expressed only in postmitotic epithelial cells rather than in proliferative progenitors in the proximal airway.

The protein resides in the nucleus. Its function is as follows. Transcription factor essential for neural and some non-neural tissues development, such as retina and lung respectively. Binds to an 11-bp consensus sequence containing the invariant tetranucleotide 5'-ACGC-3'. During development of the central nervous system, is required to specify the amacrine and horizontal cell fates from multipotent retinal progenitors while suppressing the alternative photoreceptor cell fates through activating DLL4-NOTCH signaling. Also acts synergistically with ASCL1/MASH1 to activate DLL4-NOTCH signaling and drive commitment of p2 progenitors to the V2b interneuron fates during spinal cord neurogenesis. In development of non-neural tissues, plays an essential role in the specification of the atrioventricular canal and is indirectly required for patterning the distal airway during lung development. In Mus musculus (Mouse), this protein is Forkhead box protein N4 (Foxn4).